The sequence spans 570 residues: Formate--tetrahydrofolate ligase (570 aa).

An ATP-binding site is contributed by Thr-65–Thr-72.

Belongs to the formate--tetrahydrofolate ligase family.

It carries out the reaction (6S)-5,6,7,8-tetrahydrofolate + formate + ATP = (6R)-10-formyltetrahydrofolate + ADP + phosphate. The protein operates within one-carbon metabolism; tetrahydrofolate interconversion. The chain is Formate--tetrahydrofolate ligase from Shewanella sediminis (strain HAW-EB3).